Here is a 160-residue protein sequence, read N- to C-terminus: Phosphopantetheine adenylyltransferase (160 aa).

Ser8 is a binding site for substrate. ATP is bound by residues 8–9 and His16; that span reads SF. The substrate site is built by Lys40, Leu74, and Lys88. Residues 89 to 91, Glu99, and 124 to 130 each bind ATP; these read GLR and YSFVSST.

It belongs to the bacterial CoaD family. Homohexamer. Requires Mg(2+) as cofactor.

The protein localises to the cytoplasm. It catalyses the reaction (R)-4'-phosphopantetheine + ATP + H(+) = 3'-dephospho-CoA + diphosphate. Its pathway is cofactor biosynthesis; coenzyme A biosynthesis; CoA from (R)-pantothenate: step 4/5. Reversibly transfers an adenylyl group from ATP to 4'-phosphopantetheine, yielding dephospho-CoA (dPCoA) and pyrophosphate. This chain is Phosphopantetheine adenylyltransferase, found in Thermus thermophilus (strain ATCC BAA-163 / DSM 7039 / HB27).